The sequence spans 1465 residues: Myomesin-2 (1465 aa).

Residues 38-61 (ASTQASSQKSLSQRSSSQRASSQT) are disordered. Low complexity predominate over residues 41-61 (QASSQKSLSQRSSSQRASSQT). Ig-like C2-type domains lie at 154-245 (PEIL…AAVV) and 266-371 (PLSS…AFLF). Fibronectin type-III domains lie at 385-480 (APMD…ALDP), 513-608 (PPTG…AQDV), 614-707 (APGR…VQAA), 710-812 (VPSH…TMPE), and 815-912 (PAYD…ARPG). Ig-like C2-type domains follow at residues 904-1002 (PVLV…EELE), 1130-1211 (PHFA…QDVS), and 1345-1434 (RLIG…VTVS). Positions 1442–1465 (IPDMAPPQQAKPKLIPASASAAGQ) are disordered.

As to quaternary structure, interacts with TTN/titin.

Its subcellular location is the cytoplasm. The protein localises to the myofibril. The protein resides in the sarcomere. It localises to the m line. Functionally, major component of the vertebrate myofibrillar M band. Binds myosin, titin, and light meromyosin. This binding is dose dependent. This is Myomesin-2 (MYOM2) from Homo sapiens (Human).